The primary structure comprises 252 residues: MNQPLLSVNNLTHLYAPGKGFSDVSFDLWPGEVLGIVGESGSGKTTLLKSISARLTPQQGEIHYENRSLYAMSEADRRRLLRTEWGVVHQHPLDGLRRQVSAGGNIGERLMATGARHYGDIRATAQKWLEEVEIPANRIDDLPTTFSGGMQQRLQIARNLVTHPKLVFMDEPTGGLDVSVQARLLDLLRGLVVELNLAVVIVTHDLGVARLLADRLLVMKQGQVVESGLTDRVLDDPHHPYTQLLVSSVLQN.

Positions 6–246 (LSVNNLTHLY…PHHPYTQLLV (241 aa)) constitute an ABC transporter domain. Residue 38 to 45 (GESGSGKT) coordinates ATP.

Belongs to the ABC transporter superfamily. In terms of assembly, forms a complex with PhnG, PhnH, PhnI and PhnJ with the suggested composition PhnG(4)H(2)I(2)J(2)K.

Functionally, belongs to an operon involved in alkylphosphonate uptake and C-P lyase. Exact function not known. PhnK is not required for the ribophosphonate triphosphate (RPnTP) synthase reaction. The polypeptide is Putative phosphonates utilization ATP-binding protein PhnK (phnK) (Escherichia coli (strain K12)).